Reading from the N-terminus, the 449-residue chain is Phosphoribosylamine--glycine ligase (449 aa).

An ATP-grasp domain is found at 112 to 325 (RELMEKYDIP…IVTLHASIAE (214 aa)). 139 to 202 (IDELGKPVAV…EEKCVGEEYT (64 aa)) contributes to the ATP binding site. Gln283, Glu295, and Asn297 together coordinate Mg(2+). 3 residues coordinate Mn(2+): Gln283, Glu295, and Asn297.

It belongs to the GARS family. Mg(2+) is required as a cofactor. Mn(2+) serves as cofactor.

It carries out the reaction 5-phospho-beta-D-ribosylamine + glycine + ATP = N(1)-(5-phospho-beta-D-ribosyl)glycinamide + ADP + phosphate + H(+). It participates in purine metabolism; IMP biosynthesis via de novo pathway; N(1)-(5-phospho-D-ribosyl)glycinamide from 5-phospho-alpha-D-ribose 1-diphosphate: step 2/2. This Methanopyrus kandleri (strain AV19 / DSM 6324 / JCM 9639 / NBRC 100938) protein is Phosphoribosylamine--glycine ligase.